Reading from the N-terminus, the 512-residue chain is Maturase K (512 aa).

The protein belongs to the intron maturase 2 family. MatK subfamily.

Its subcellular location is the plastid. It localises to the chloroplast. Its function is as follows. Usually encoded in the trnK tRNA gene intron. Probably assists in splicing its own and other chloroplast group II introns. The protein is Maturase K of Lemna gibba (Swollen duckweed).